We begin with the raw amino-acid sequence, 415 residues long: MARGKNHPDGEEEEAPAAAGEEEAPVEMDEEGEMEEEEEEEQGEGEGEERDEGEEEEEWEDAEEVEGGEESEQAAAEEEDSPLVVVEAEAAAPVVDGSPPKLAEGYYEIEDIRRRRLRKGKLQYLVKWRGWPESANTWEPLENLSACSDIIDAFEMRLQSPRPGRKRKRKITTTPVAGSNPSHGKRGRPRLDAKSHTRAPAPEPKQLPCRTSCRRATNCSSKTVAGLDASGSVVRNQLAQNIVQEGSSSVISRTPCQELPLSIRLTDQQNEHHLVNGSSNSENLVKVPPSQGGQVTGAKKRKSGNVRRFEQNKPTQGQGECGALVVAEDVGSTEGETGDKKKTEGCPNRVHITKIIKPVRFAAAVNNDVQQVSITFKALRSDGQEVMVDDKELKANNPLLLISYYEQCLRYNPTS.

Disordered stretches follow at residues 1–102 (MARG…PPKL), 158–209 (LQSP…QLPC), and 273–318 (HLVN…TQGQ). Residues 10–81 (GEEEEAPAAA…EQAAAEEEDS (72 aa)) show a composition bias toward acidic residues. The span at 84–95 (VVVEAEAAAPVV) shows a compositional bias: low complexity. One can recognise a Chromo 1 domain in the interval 107–166 (YEIEDIRRRRLRKGKLQYLVKWRGWPESANTWEPLENLSACSDIIDAFEMRLQSPRPGRK). Residues 172–182 (TTTPVAGSNPS) show a composition bias toward polar residues. The Chromo 2; shadow subtype domain maps to 348–412 (NRVHITKIIK…SYYEQCLRYN (65 aa)).

As to quaternary structure, homodimer.

The protein localises to the nucleus. Structural component of heterochromatin involved in gene repression. Recognizes and binds histone H3 tails methylated at 'Lys-9', leading to epigenetic repression. The protein is Probable chromo domain-containing protein LHP1 (LHP1) of Oryza sativa subsp. japonica (Rice).